The following is a 325-amino-acid chain: RNA ligase 1 (325 aa).

It depends on Mg(2+) as a cofactor. The cofactor is Mn(2+). In terms of processing, AMPylates itself (auto-AMPylation).

The enzyme catalyses ATP + (ribonucleotide)n-3'-hydroxyl + 5'-phospho-(ribonucleotide)m = (ribonucleotide)n+m + AMP + diphosphate.. In terms of biological role, functions as an RNA ligase, in vitro. The ligation reaction entails three nucleotidyl transfer steps. In the first step, the RNA ligase reacts with ATP in the absence of nucleic acid to form a covalent ligase-AMP intermediate and release pyrophosphate. In step 2, the ligase-AMP binds to the nucleic acid and transfers the adenylate to the 5'-PO4 terminus to form an adenylylated intermediate. In step 3, the RNA ligase directs the attack of the 3'-OH on the 5'-phosphoanhydride linkage, resulting in a repaired 3'-5' phosphodiester and release of AMP. Exhibits selectivity for single-stranded RNA substrates and may not have nick-sealing activity on double-stranded DNA-RNA hybrids. May play a role in maintaining RNA integrity under stress conditions, for example in response to reactive oxygen species (ROS). This Pongo abelii (Sumatran orangutan) protein is RNA ligase 1.